Reading from the N-terminus, the 207-residue chain is Large ribosomal subunit protein uL4 (207 aa).

Positions 50 to 76 (KTKTVSEVSGTTKKPFKQKGTGNARQG) are disordered.

The protein belongs to the universal ribosomal protein uL4 family. Part of the 50S ribosomal subunit.

Functionally, one of the primary rRNA binding proteins, this protein initially binds near the 5'-end of the 23S rRNA. It is important during the early stages of 50S assembly. It makes multiple contacts with different domains of the 23S rRNA in the assembled 50S subunit and ribosome. Forms part of the polypeptide exit tunnel. In Rickettsia typhi (strain ATCC VR-144 / Wilmington), this protein is Large ribosomal subunit protein uL4.